The chain runs to 441 residues: Synaptotagmin-1 (441 aa).

The Vesicular segment spans residues 1-69 (MVKLDFSSQD…DVVKEKVMQQ (69 aa)). Residues 70 to 96 (TGMPEWAFVFLGFVFILLVLACAFCLI) traverse the membrane as a helical segment. At 97–441 (RKLFGKKRHG…EEGDKKDDKK (345 aa)) the chain is on the cytoplasmic side. C2 domains lie at 159–278 (KLGR…EEWK) and 292–425 (SLGD…AQWH). Ca(2+) contacts are provided by aspartate 190, aspartate 196, aspartate 248, phenylalanine 249, aspartate 250, serine 253, lysine 254, aspartate 256, aspartate 323, aspartate 329, aspartate 383, aspartate 385, and aspartate 391.

Belongs to the synaptotagmin family. The cofactor is Ca(2+). In terms of tissue distribution, localized to regions known to be rich in synapses and appears to be associated with synaptic vesicles. Also found in some non-neuronal secretory structures.

The protein localises to the cytoplasmic vesicle. It is found in the secretory vesicle. Its subcellular location is the synaptic vesicle membrane. It localises to the synapse. In terms of biological role, may have a regulatory role in the membrane interactions during trafficking of synaptic vesicles at the active zone of the synapse. It binds acidic phospholipids with a specificity that requires the presence of both an acidic head group and a diacyl backbone. Involved in necrotic cell death. This is Synaptotagmin-1 (snt-1) from Caenorhabditis elegans.